The chain runs to 454 residues: CBL-interacting protein kinase 4 (454 aa).

The Protein kinase domain occupies 25-284; that stretch reads YELGRMLGRG…ESLAAHHPWF (260 aa). ATP is bound by residues 31-39 and lysine 54; that span reads LGRGTFAKV. Aspartate 151 serves as the catalytic Proton acceptor. The activation loop stretch occupies residues 169–198; the sequence is DFGLAALPDTLRDDGRLHTACGTPAYAAPE. The 25-residue stretch at 311–335 folds into the NAF domain; the sequence is APPPPLNAFDIISMSPGLDLSGLFG. The PPI stretch occupies residues 341 to 370; it reads LREKRFTTTASPEKTLEQLGLAGGKLGYVV.

The protein belongs to the protein kinase superfamily. CAMK Ser/Thr protein kinase family. SNF1 subfamily. The cofactor is Mn(2+).

It carries out the reaction L-seryl-[protein] + ATP = O-phospho-L-seryl-[protein] + ADP + H(+). It catalyses the reaction L-threonyl-[protein] + ATP = O-phospho-L-threonyl-[protein] + ADP + H(+). CIPK serine-threonine protein kinases interact with CBL proteins. Binding of a CBL protein to the regulatory NAF domain of CIPK protein lead to the activation of the kinase in a calcium-dependent manner. This is CBL-interacting protein kinase 4 (CIPK4) from Oryza sativa subsp. japonica (Rice).